We begin with the raw amino-acid sequence, 46 residues long: Defensin-like protein AX2 (46 aa).

4 disulfide bridges follow: Cys-3-Cys-46, Cys-14-Cys-34, Cys-20-Cys-40, and Cys-24-Cys-42.

As to expression, leaves and flowers.

In terms of biological role, strong inhibiting activity against C.beticola and other filamentous fungi. Little or no effect against bacteria. In Beta vulgaris (Sugar beet), this protein is Defensin-like protein AX2.